The following is a 473-amino-acid chain: Ribosomal RNA small subunit methyltransferase F (473 aa).

S-adenosyl-L-methionine-binding positions include 123-129 (AAAPGSK), glutamate 147, aspartate 174, and aspartate 192. The active-site Nucleophile is the cysteine 245.

Belongs to the class I-like SAM-binding methyltransferase superfamily. RsmB/NOP family.

It localises to the cytoplasm. The catalysed reaction is cytidine(1407) in 16S rRNA + S-adenosyl-L-methionine = 5-methylcytidine(1407) in 16S rRNA + S-adenosyl-L-homocysteine + H(+). Its function is as follows. Specifically methylates the cytosine at position 1407 (m5C1407) of 16S rRNA. The protein is Ribosomal RNA small subunit methyltransferase F of Vibrio cholerae serotype O1 (strain ATCC 39315 / El Tor Inaba N16961).